The primary structure comprises 63 residues: Small ribosomal subunit protein eS31 (63 aa).

Positions 31, 34, 50, and 53 each coordinate Zn(2+).

The protein belongs to the eukaryotic ribosomal protein eS31 family. Part of the 30S ribosomal subunit. Zn(2+) is required as a cofactor.

The sequence is that of Small ribosomal subunit protein eS31 (rps27ae) from Aeropyrum pernix (strain ATCC 700893 / DSM 11879 / JCM 9820 / NBRC 100138 / K1).